The sequence spans 535 residues: Dimethylaniline monooxygenase [N-oxide-forming] 2 (535 aa).

Ala-2 carries the post-translational modification N-acetylalanine. FAD is bound by residues 9-13 (GAGVS), Glu-32, 40-41 (VW), and 61-62 (NT). NADP(+)-binding positions include 60-61 (TN) and 195-198 (SGSD). Lys-492 is covalently cross-linked (Glycyl lysine isopeptide (Lys-Gly) (interchain with G-Cter in SUMO)). Residues 510–530 (FSVSFLLKILGLLAVVVAFFC) form a helical membrane-spanning segment.

This sequence belongs to the FMO family. It depends on FAD as a cofactor. Requires Mg(2+) as cofactor.

It is found in the microsome membrane. Its subcellular location is the endoplasmic reticulum membrane. In terms of biological role, catalyzes the oxidative metabolism of numerous xenobiotics, including mainly therapeutic drugs and insecticides that contain a soft nucleophile, most commonly nitrogen and sulfur and participates to their bioactivation. This chain is Dimethylaniline monooxygenase [N-oxide-forming] 2, found in Pan troglodytes (Chimpanzee).